Here is a 676-residue protein sequence, read N- to C-terminus: WD repeat-containing protein 48 (676 aa).

Tyr-28 carries the post-translational modification Phosphotyrosine. WD repeat units lie at residues 28-67, 73-112, 115-154, 166-205, 208-247, 250-289, 292-334, and 358-397; these read YNRN…QDPY, HHTD…CMST, THKD…ALTA, GNKD…KLMK, GHTD…CIAT, VHDE…IRVL, EEKA…NFRA, and KGGA…KVED. An N6-acetyllysine modification is found at Lys-214. Position 578 is an N6-acetyllysine (Lys-578). Residues 607–628 are disordered; it reads LDNESQTTSSSNNEKPEQEKEE. Residues 609–619 show a composition bias toward low complexity; that stretch reads NESQTTSSSNN. A Phosphothreonine modification is found at Thr-613.

It belongs to the WD repeat WDR48 family. In terms of assembly, interacts with USP46. Interacts with USP1. Interacts with USP12. Component of the USP12-WDR20-WDR48 deubiquitinating complex. Component of the USP12-DMWD-WDR48 deubiquitinating complex. Interacts with PHLPP1. Interacts with RAD51AP1; the interaction is direct and promotes formation of a trimeric complex with RAD51 via RAD51AP1. Interacts with ATAD5; the interaction regulates USP1-mediated PCNA deubiquitination. Interacts with RAD51; the interaction is enhanced under replication stress. Interacts with ITCH; the interaction is more efficient when both USP12 and WDR48/UAF1 are involved and may facilitate recruitment of the USP12 deubiquitinating complex to Notch.

It is found in the nucleus. Its subcellular location is the cytoplasm. The protein resides in the lysosome. The protein localises to the late endosome. Functionally, regulator of deubiquitinating complexes, which acts as a strong activator of USP1, USP12 and USP46. Enhances the USP1-mediated deubiquitination of FANCD2; USP1 being almost inactive by itself. Activates deubiquitination by increasing the catalytic turnover without increasing the affinity of deubiquitinating enzymes for the substrate. Also activates deubiquitinating activity of complexes containing USP12. Docks at the distal end of the USP12 fingers domain and induces a cascade of structural changes leading to the activation of the enzyme. Together with RAD51AP1, promotes DNA repair by stimulating RAD51-mediated homologous recombination. Binds single-stranded DNA (ssDNA) and double-stranded DNA (dsDNA). DNA-binding is required both for USP1-mediated deubiquitination of FANCD2 and stimulation of RAD51-mediated homologous recombination: both WDR48/UAF1 and RAD51AP1 have coordinated role in DNA-binding during these processes. Together with ATAD5 and by regulating USP1 activity, has a role in PCNA-mediated translesion synthesis (TLS) by deubiquitinating monoubiquitinated PCNA. Together with ATAD5, has a role in recruiting RAD51 to stalled forks during replication stress. This is WD repeat-containing protein 48 (Wdr48) from Mus musculus (Mouse).